Consider the following 187-residue polypeptide: Elongation factor P (187 aa).

This sequence belongs to the elongation factor P family.

It is found in the cytoplasm. It participates in protein biosynthesis; polypeptide chain elongation. Functionally, involved in peptide bond synthesis. Stimulates efficient translation and peptide-bond synthesis on native or reconstituted 70S ribosomes in vitro. Probably functions indirectly by altering the affinity of the ribosome for aminoacyl-tRNA, thus increasing their reactivity as acceptors for peptidyl transferase. In Mycobacterium sp. (strain JLS), this protein is Elongation factor P.